The chain runs to 277 residues: Caspase-6 (277 aa).

Residues 1-5 constitute a propeptide that is removed on maturation; the sequence is MTETD. A tri-arginine exosite region spans residues 25 to 27; it reads KRR. S62 bears the Phosphoserine mark. H104 is an active-site residue. The tract at residues 108-125 is 130's region; it reads NHIYAYDAKIEIQTLTGL. The active site involves C146. A propeptide spanning residues 163–176 is cleaved from the precursor; that stretch reads HQTDKLDDNVTQVD. S240 is modified (phosphoserine). S-palmitoyl cysteine attachment occurs at residues C247 and C260.

This sequence belongs to the peptidase C14A family. As to quaternary structure, heterotetramer that consists of two anti-parallel arranged heterodimers, each one formed by a 18 kDa (p18) and a 11 kDa (p11) subunits. Interacts with BIRC6/bruce. Interacts with RIPK3. In terms of assembly, heterotetramer that consists of two anti-parallel arranged heterodimers, each one formed by a 18 kDa (Caspase-6 subunit p18) and a 11 kDa (Caspase-6 subunit p11) subunit. Post-translationally, phosphorylated by NUAK1; phosphorylation inhibits self-activation. Phosphorylation at Ser-240 by AMP-activated protein kinase (PRKAA1 or PRKAA2) inhibits autocleavage, preventing caspase activation, thereby preventing hepatocyte apoptosis. In terms of processing, palmitoylation by ZDHHC17 blocks dimerization and subsequent activation, leading to inhibit the cysteine protease activity. Can be cleaved and activated by different caspases, depending on the context. Cleaved and activated by caspase-8 (CASP8) and subsequently by caspase-3 (CASP3). Can also undergo autoactivation by mediating autocleavage at Asp-162 and Asp-176, while it is not able to cleave its N-terminal disordered prodomain. Cleaved and activated by CASP1, possibly in the context of inflammation.

It is found in the cytoplasm. The protein resides in the nucleus. It catalyses the reaction Strict requirement for Asp at position P1 and has a preferred cleavage sequence of Val-Glu-His-Asp-|-.. With respect to regulation, during activation, the N-terminal disordered prodomain is removed by cleavage. Concomitantly, double cleavage gives rise to a large 18-kDa and a small 11-kDa subunit. The two large and two small subunits then assemble to form the active CASP6 complex. Can be cleaved and activated by different caspases, depending on the context. Cleaved and activated by caspase-8 (CASP8) and subsequently by caspase-3 (CASP3). Can also undergo autoactivation by mediating autocleavage at Asp-162 and Asp-176, while it is not able to cleave its N-terminal disordered prodomain. Intramolecular cleavage at Asp-176 is a prerequisite for CASP6 self-activation. Cleaved and activated by CASP1 in neurons, possibly in the context of inflammation. Phosphorylation at Ser-240 inhibits autocleavage, preventing caspase activation. Functionally, cysteine protease that plays essential roles in programmed cell death, axonal degeneration, development and innate immunity. Acts as a non-canonical executioner caspase during apoptosis: localizes in the nucleus and cleaves the nuclear structural protein NUMA1 and lamin A/LMNA thereby inducing nuclear shrinkage and fragmentation. Lamin-A/LMNA cleavage is required for chromatin condensation and nuclear disassembly during apoptotic execution. Acts as a regulator of liver damage by promoting hepatocyte apoptosis: in absence of phosphorylation by AMP-activated protein kinase (AMPK), catalyzes cleavage of BID, leading to cytochrome c release, thereby participating in nonalcoholic steatohepatitis. Cleaves PARK7/DJ-1 in cells undergoing apoptosis. Involved in intrinsic apoptosis by mediating cleavage of RIPK1. Furthermore, cleaves many transcription factors such as NF-kappa-B and cAMP response element-binding protein/CREBBP. Cleaves phospholipid scramblase proteins XKR4 and XKR9. In addition to apoptosis, involved in different forms of programmed cell death. Plays an essential role in defense against viruses by acting as a central mediator of the ZBP1-mediated pyroptosis, apoptosis, and necroptosis (PANoptosis), independently of its cysteine protease activity. PANoptosis is a unique inflammatory programmed cell death, which provides a molecular scaffold that allows the interactions and activation of machinery required for inflammasome/pyroptosis, apoptosis and necroptosis. Mechanistically, interacts with RIPK3 and enhances the interaction between RIPK3 and ZBP1, leading to ZBP1-mediated inflammasome activation and cell death. Plays an essential role in axon degeneration during axon pruning which is the remodeling of axons during neurogenesis but not apoptosis. Regulates B-cell programs both during early development and after antigen stimulation. The chain is Caspase-6 from Rattus norvegicus (Rat).